Consider the following 31-residue polypeptide: Cytochrome b6-f complex subunit 6 (31 aa).

A helical transmembrane segment spans residues 4 to 24 (IISYFGLLLATLTFTIVLFVG).

This sequence belongs to the PetL family. In terms of assembly, the 4 large subunits of the cytochrome b6-f complex are cytochrome b6, subunit IV (17 kDa polypeptide, PetD), cytochrome f and the Rieske protein, while the 4 small subunits are PetG, PetL, PetM and PetN. The complex functions as a dimer.

It localises to the plastid. It is found in the chloroplast thylakoid membrane. Functionally, component of the cytochrome b6-f complex, which mediates electron transfer between photosystem II (PSII) and photosystem I (PSI), cyclic electron flow around PSI, and state transitions. PetL is important for photoautotrophic growth as well as for electron transfer efficiency and stability of the cytochrome b6-f complex. The polypeptide is Cytochrome b6-f complex subunit 6 (Staurastrum punctulatum (Green alga)).